Reading from the N-terminus, the 546-residue chain is Chaperonin GroEL (546 aa).

ATP is bound by residues 29–32 (TMGP), lysine 50, 86–90 (DGTTT), glycine 414, and aspartate 492.

The protein belongs to the chaperonin (HSP60) family. In terms of assembly, forms a cylinder of 14 subunits composed of two heptameric rings stacked back-to-back. Interacts with the co-chaperonin GroES.

It localises to the cytoplasm. The catalysed reaction is ATP + H2O + a folded polypeptide = ADP + phosphate + an unfolded polypeptide.. Its function is as follows. Together with its co-chaperonin GroES, plays an essential role in assisting protein folding. The GroEL-GroES system forms a nano-cage that allows encapsulation of the non-native substrate proteins and provides a physical environment optimized to promote and accelerate protein folding. This chain is Chaperonin GroEL, found in Helicobacter pylori (strain J99 / ATCC 700824) (Campylobacter pylori J99).